Reading from the N-terminus, the 750-residue chain is Ribosomal RNA large subunit methyltransferase K/L (750 aa).

Residues 46 to 157 (TAYRLCLWSR…RGEAILSLDL (112 aa)) form the THUMP domain.

The protein belongs to the methyltransferase superfamily. RlmKL family.

The protein localises to the cytoplasm. It catalyses the reaction guanosine(2445) in 23S rRNA + S-adenosyl-L-methionine = N(2)-methylguanosine(2445) in 23S rRNA + S-adenosyl-L-homocysteine + H(+). The enzyme catalyses guanosine(2069) in 23S rRNA + S-adenosyl-L-methionine = N(2)-methylguanosine(2069) in 23S rRNA + S-adenosyl-L-homocysteine + H(+). Its function is as follows. Specifically methylates the guanine in position 2445 (m2G2445) and the guanine in position 2069 (m7G2069) of 23S rRNA. The protein is Ribosomal RNA large subunit methyltransferase K/L of Pseudomonas savastanoi pv. phaseolicola (strain 1448A / Race 6) (Pseudomonas syringae pv. phaseolicola (strain 1448A / Race 6)).